Here is a 247-residue protein sequence, read N- to C-terminus: Neurotrophic factor BDNF precursor form (247 aa).

The first 18 residues, 1 to 18 (MTILFLTMVISYFGCMKA), serve as a signal peptide directing secretion. The propeptide occupies 19-128 (APMKEANVRG…AANMSMRVRR (110 aa)). An N-linked (GlcNAc...) asparagine glycan is attached at asparagine 121. Intrachain disulfides connect cysteine 141-cysteine 208, cysteine 186-cysteine 237, and cysteine 196-cysteine 239.

This sequence belongs to the NGF-beta family. In terms of assembly, monomers and homodimers. Binds to NTRK2/TRKB. Can form heterodimers with other neurotrophin family members, such as NTF3 and NTF4 (in vitro), but the physiological relevance of this is not clear. BDNF precursor form: interacts with the heterodimer formed by NGFR and SORCS2. Mature BDNF has much lower affinity for the heterodimer formed by NGFR and SORCS2. In terms of processing, N-glycosylated and glycosulfated, contrary to mature BDNF. Mature BDNF is produced by proteolytic removal of the propeptide, catalyzed by a FURIN family member. In addition, the precursor form is proteolytically cleaved within the propeptide, but this is not an obligatory intermediate for the production of mature BDNF. Can be converted into mature BDNF by plasmin (PLG).

The protein resides in the secreted. Important signaling molecule that activates signaling cascades downstream of NTRK2. During development, promotes the survival and differentiation of selected neuronal populations of the peripheral and central nervous systems. Participates in axonal growth, pathfinding and in the modulation of dendritic growth and morphology. Major regulator of synaptic transmission and plasticity at adult synapses in many regions of the CNS. The versatility of BDNF is emphasized by its contribution to a range of adaptive neuronal responses including long-term potentiation (LTP), long-term depression (LTD), certain forms of short-term synaptic plasticity, as well as homeostatic regulation of intrinsic neuronal excitability. Its function is as follows. Important signaling molecule that activates signaling cascades downstream of NTRK2. Activates signaling cascades via the heterodimeric receptor formed by NGFR and SORCS2. Signaling via NGFR and SORCS2 plays a role in synaptic plasticity and long-term depression (LTD). Binding to NGFR and SORCS2 promotes neuronal apoptosis. Promotes neuronal growth cone collapse. The chain is Neurotrophic factor BDNF precursor form (BDNF) from Ursus arctos (Brown bear).